Reading from the N-terminus, the 248-residue chain is Aspartate/glutamate leucyltransferase (248 aa).

The protein belongs to the R-transferase family. Bpt subfamily.

It is found in the cytoplasm. It catalyses the reaction N-terminal L-glutamyl-[protein] + L-leucyl-tRNA(Leu) = N-terminal L-leucyl-L-glutamyl-[protein] + tRNA(Leu) + H(+). It carries out the reaction N-terminal L-aspartyl-[protein] + L-leucyl-tRNA(Leu) = N-terminal L-leucyl-L-aspartyl-[protein] + tRNA(Leu) + H(+). In terms of biological role, functions in the N-end rule pathway of protein degradation where it conjugates Leu from its aminoacyl-tRNA to the N-termini of proteins containing an N-terminal aspartate or glutamate. This is Aspartate/glutamate leucyltransferase from Methylobacterium nodulans (strain LMG 21967 / CNCM I-2342 / ORS 2060).